A 176-amino-acid chain; its full sequence is MIDDDGYRPNVGIVICNRQGQVMWARRFGQHSWQFPQGGINPGESAEQAMYRELFEEVGLSRKDVRILASTRNWLRYKLPKRLVRWDTKPVCIGQKQKWFLLQLMSADAEINMQTSSTPEFDGWRWVSYWYPVRQVVSFKRDVYRRVMKEFASVVMALQDNPPKLQSAPAYRRKRG.

Residues 6-149 form the Nudix hydrolase domain; that stretch reads GYRPNVGIVI…KRDVYRRVMK (144 aa). The Nudix box signature appears at 38 to 59; that stretch reads GGINPGESAEQAMYRELFEEVG.

The protein belongs to the Nudix hydrolase family. RppH subfamily. A divalent metal cation is required as a cofactor.

Functionally, accelerates the degradation of transcripts by removing pyrophosphate from the 5'-end of triphosphorylated RNA, leading to a more labile monophosphorylated state that can stimulate subsequent ribonuclease cleavage. The sequence is that of RNA pyrophosphohydrolase from Salmonella paratyphi C (strain RKS4594).